We begin with the raw amino-acid sequence, 129 residues long: uncharacterized protein (129 aa).

This sequence belongs to the HesB/IscA family.

This is an uncharacterized protein from Buchnera aphidicola subsp. Schizaphis graminum (strain Sg).